The primary structure comprises 390 residues: MGFEHLRTELEEMKQAGTFRELVALESAQHNRVTVDGKELIQLSSNNYLGLAAHPRLAKRAADAALEFGAGTGSVRTIAGTLEMHQAFERELATFKHTEAALVFQSGFATNLGVLSALLGPEDVVISDALNHASIIDGIRLTKAKRRIYNHVDLADLEAALQETQDARTRLVVTDGVFSMDGNIAPLPEIVELAEKYDALVMVDDAHASGVLGKSGRGTVNHFGLDGRVALQVGTLSKAIGVLGGYVACEQHVKDYLIHKGRPFLFSTSHPPAVVEANREALRVMEEETELFDRLWENTEFFKHGLRELGFNIGTSTTPITPVIVGDEALCHQLSDRLRQHGVFAQGIAFPTVAKGKARVRTIVTAEHTREDLEQALEAFKQVGQELELI.

Arg20 is a substrate binding site. A pyridoxal 5'-phosphate-binding site is contributed by 107 to 108; sequence GF. His132 is a binding site for substrate. Pyridoxal 5'-phosphate contacts are provided by residues Ser179, 204–207, and 235–238; these read DDAH and TLSK. Lys238 is subject to N6-(pyridoxal phosphate)lysine. Thr352 is a substrate binding site.

Belongs to the class-II pyridoxal-phosphate-dependent aminotransferase family. BioF subfamily. As to quaternary structure, homodimer. Pyridoxal 5'-phosphate serves as cofactor.

It carries out the reaction 6-carboxyhexanoyl-[ACP] + L-alanine + H(+) = (8S)-8-amino-7-oxononanoate + holo-[ACP] + CO2. The protein operates within cofactor biosynthesis; biotin biosynthesis. Functionally, catalyzes the decarboxylative condensation of pimeloyl-[acyl-carrier protein] and L-alanine to produce 8-amino-7-oxononanoate (AON), [acyl-carrier protein], and carbon dioxide. This chain is 8-amino-7-oxononanoate synthase, found in Exiguobacterium sibiricum (strain DSM 17290 / CCUG 55495 / CIP 109462 / JCM 13490 / 255-15).